The chain runs to 537 residues: MTDTPRILITPSPLSDISTTINKPNVHPSMSLLKALPECRLVVKSKGDKNNANVVEFPLDRHKQLLIAGKVYHDYKFKPRKSIFDRVTDPNYFAKSEFRGFYVLFWLSMAAWVLQLYARSYWQRDTLLGLPLARQVFRQFFVLFSSDFLMICLSFFSYGLQVCIEKNMIRWANLGYTIQTLWQGFYMVLAVYWVKHRDFPIVQCVFFTLHCAVLIMKQFSYSHHMGYISEIRILHNEYEKLLKFVRECLNSTEKDEKYTFELTFPNKPAETISTLQAEEIVALTAKYLSRQMRSEVGNVVYPDNINFFNYVDYLLVPSLVYSMEFPRVAHFRWHYMAFKAGSTFGLLALTLALVDWYFVPSAVAVKDLDFIGKLRIAPLLMNKIMFPAIILYLIMFYLIFDCILNAFAEITKFADRGFYGAWWNTVTWDEFSREWNKPVHVFLMRHVYHSSISGFKLKKSHAVLLTFLISALVHEFVMLLATGKFRCYILTFQLLQIPLYDLQQMFAFKKRDILGNVFFWIGMFTGPSFLCILYIVF.

4 helical membrane-spanning segments follow: residues 98–118 (FRGFYVLFWLSMAAWVLQLYA), 140–160 (FFVLFSSDFLMICLSFFSYGL), 174–194 (LGYTIQTLWQGFYMVLAVYWV), and 199–219 (FPIVQCVFFTLHCAVLIMKQF). N250 carries an N-linked (GlcNAc...) asparagine glycan. 2 helical membrane passes run 344 to 364 (FGLLALTLALVDWYFVPSAVA) and 384 to 404 (IMFPAIILYLIMFYLIFDCIL). Residues 418–424 (FYGAWWN) carry the FYXDWWN motif motif. 2 helical membrane-spanning segments follow: residues 462-482 (AVLLTFLISALVHEFVMLLAT) and 517-537 (VFFWIGMFTGPSFLCILYIVF). H474 is an active-site residue.

Belongs to the membrane-bound acyltransferase family. Sterol o-acyltransferase subfamily.

The protein resides in the endoplasmic reticulum membrane. Functionally, sterol O-acyltransferase that catalyzes the formation of stery esters. This chain is Probable sterol O-acyltransferase 1 (are1), found in Schizosaccharomyces pombe (strain 972 / ATCC 24843) (Fission yeast).